The following is a 526-amino-acid chain: Cytochrome P450 monooxygenase COX2 (526 aa).

Residue Asn-11 is glycosylated (N-linked (GlcNAc...) asparagine). The chain crosses the membrane as a helical span at residues 12-31 (ITTNHVAAAVCAGIAVYAIV). The N-linked (GlcNAc...) asparagine glycan is linked to Asn-302. Cys-450 is a binding site for heme.

It belongs to the cytochrome P450 family. The cofactor is heme.

The protein localises to the membrane. It functions in the pathway secondary metabolite biosynthesis. Functionally, cytochrome P450 monooxygenase; part of the gene cluster that mediates the biosynthesis of alpha-cuprenene and oxidized derivatives. The alpha-cuprenene synthase COP6 is the only sesquiterpene synthase identified in C.cinereus that appears to be part of a biosynthetic gene cluster and is highly specific since it catalyzes the cyclization of (2E,6E)-farnesyl diphosphate into only one product, alpha-cuprenene. The cytochrome P450 monooxygenase COX2 then oxidizes the cyclohexadiene ring of alpha-cuprenene at positions 1 and 4, yielding first alpha-cuparene, followed by alpha-cuparophenol and a further yet unidentified compound resulting from one additional oxidation step. The cytochrome P450 monooxygenase COX1 then likely catalyzes the oxidation at position 9 of the pentane ring of alpha-cuprenene to give the corresponding hydroxy or ketone derivatives. The polypeptide is Cytochrome P450 monooxygenase COX2 (Coprinopsis cinerea (strain Okayama-7 / 130 / ATCC MYA-4618 / FGSC 9003) (Inky cap fungus)).